The primary structure comprises 146 residues: Cyanate hydratase (146 aa).

Active-site residues include arginine 87, glutamate 90, and serine 113.

Belongs to the cyanase family.

It catalyses the reaction cyanate + hydrogencarbonate + 3 H(+) = NH4(+) + 2 CO2. Catalyzes the reaction of cyanate with bicarbonate to produce ammonia and carbon dioxide. The polypeptide is Cyanate hydratase (Synechococcus elongatus (strain ATCC 33912 / PCC 7942 / FACHB-805) (Anacystis nidulans R2)).